Here is a 542-residue protein sequence, read N- to C-terminus: Chaperonin GroEL (542 aa).

ATP contacts are provided by residues Thr-29–Pro-32, Asp-86–Thr-90, Gly-413, Asn-476–Ala-478, and Asp-492. The disordered stretch occupies residues Pro-522 to Met-542.

This sequence belongs to the chaperonin (HSP60) family. Forms a cylinder of 14 subunits composed of two heptameric rings stacked back-to-back. Interacts with the co-chaperonin GroES.

It localises to the cytoplasm. The enzyme catalyses ATP + H2O + a folded polypeptide = ADP + phosphate + an unfolded polypeptide.. Functionally, together with its co-chaperonin GroES, plays an essential role in assisting protein folding. The GroEL-GroES system forms a nano-cage that allows encapsulation of the non-native substrate proteins and provides a physical environment optimized to promote and accelerate protein folding. This chain is Chaperonin GroEL, found in Listeria monocytogenes serotype 4a (strain HCC23).